The following is a 310-amino-acid chain: Acetylglutamate kinase (310 aa).

Substrate is bound by residues Gly-83 to Gly-84, Arg-105, and Asn-207.

This sequence belongs to the acetylglutamate kinase family. ArgB subfamily.

It localises to the cytoplasm. The catalysed reaction is N-acetyl-L-glutamate + ATP = N-acetyl-L-glutamyl 5-phosphate + ADP. Its pathway is amino-acid biosynthesis; L-arginine biosynthesis; N(2)-acetyl-L-ornithine from L-glutamate: step 2/4. Catalyzes the ATP-dependent phosphorylation of N-acetyl-L-glutamate. The sequence is that of Acetylglutamate kinase from Ralstonia nicotianae (strain ATCC BAA-1114 / GMI1000) (Ralstonia solanacearum).